An 84-amino-acid chain; its full sequence is RNA-binding protein Hfq (84 aa).

The region spanning 9 to 68 is the Sm domain; it reads DPYLNTLRKERVPVSIYLVNGIKLQGQIESFDQFVILLKNTVSQMVYKHAISTVVPGRPV.

This sequence belongs to the Hfq family. Homohexamer.

In terms of biological role, RNA chaperone that binds small regulatory RNA (sRNAs) and mRNAs to facilitate mRNA translational regulation in response to envelope stress, environmental stress and changes in metabolite concentrations. Also binds with high specificity to tRNAs. The protein is RNA-binding protein Hfq of Stutzerimonas stutzeri (strain A1501) (Pseudomonas stutzeri).